Reading from the N-terminus, the 473-residue chain is ATP synthase subunit beta (473 aa).

Position 153–160 (153–160 (GGAGVGKT)) interacts with ATP.

This sequence belongs to the ATPase alpha/beta chains family. F-type ATPases have 2 components, CF(1) - the catalytic core - and CF(0) - the membrane proton channel. CF(1) has five subunits: alpha(3), beta(3), gamma(1), delta(1), epsilon(1). CF(0) has three main subunits: a(1), b(2) and c(9-12). The alpha and beta chains form an alternating ring which encloses part of the gamma chain. CF(1) is attached to CF(0) by a central stalk formed by the gamma and epsilon chains, while a peripheral stalk is formed by the delta and b chains.

The protein resides in the cell inner membrane. It carries out the reaction ATP + H2O + 4 H(+)(in) = ADP + phosphate + 5 H(+)(out). In terms of biological role, produces ATP from ADP in the presence of a proton gradient across the membrane. The catalytic sites are hosted primarily by the beta subunits. The protein is ATP synthase subunit beta of Rickettsia rickettsii (strain Iowa).